The chain runs to 261 residues: HLA class II histocompatibility antigen, DQ beta 1 chain (261 aa).

The N-terminal stretch at 1 to 32 (MSWKKALRIPGGLRAATVTLMLAMLSTPVAEG) is a signal peptide. The beta-1 stretch occupies residues 33 to 126 (RDSPEDFVYQ…LELRTTLQRR (94 aa)). Residues 33 to 230 (RDSPEDFVYQ…RAQSESAQSK (198 aa)) lie on the Extracellular side of the membrane. 2 disulfide bridges follow: Cys-47-Cys-111 and Cys-149-Cys-205. Asn-51 carries N-linked (GlcNAc...) asparagine glycosylation. A beta-2 region spans residues 127–220 (VEPTVTISPS…SLQNPITVEW (94 aa)). The Ig-like C1-type domain occupies 129 to 217 (PTVTISPSRT…EHPSLQNPIT (89 aa)). Residues 221 to 230 (RAQSESAQSK) form a connecting peptide region. A helical membrane pass occupies residues 231–251 (MLSGIGGFVLGLIFLGLGLII). At 252-261 (HHRSQKGLLH) the chain is on the cytoplasmic side.

The protein belongs to the MHC class II family. In terms of assembly, heterodimer of an alpha and a beta subunit; also referred as MHC class II molecule. In the endoplasmic reticulum (ER) it forms a heterononamer; 3 MHC class II molecules bind to a CD74 homotrimer (also known as invariant chain or HLA class II histocompatibility antigen gamma chain). In the endosomal/lysosomal system; CD74 undergoes sequential degradation by various proteases; leaving a small fragment termed CLIP on each MHC class II molecule. MHC class II molecule interacts with HLA_DM, and HLA_DO in B-cells, in order to release CLIP and facilitate the binding of antigenic peptides.

The protein localises to the cell membrane. The protein resides in the endoplasmic reticulum membrane. It localises to the golgi apparatus. Its subcellular location is the trans-Golgi network membrane. It is found in the endosome membrane. The protein localises to the lysosome membrane. Binds peptides derived from antigens that access the endocytic route of antigen presenting cells (APC) and presents them on the cell surface for recognition by the CD4 T-cells. The peptide binding cleft accommodates peptides of 10-30 residues. The peptides presented by MHC class II molecules are generated mostly by degradation of proteins that access the endocytic route, where they are processed by lysosomal proteases and other hydrolases. Exogenous antigens that have been endocytosed by the APC are thus readily available for presentation via MHC II molecules, and for this reason this antigen presentation pathway is usually referred to as exogenous. As membrane proteins on their way to degradation in lysosomes as part of their normal turn-over are also contained in the endosomal/lysosomal compartments, exogenous antigens must compete with those derived from endogenous components. Autophagy is also a source of endogenous peptides, autophagosomes constitutively fuse with MHC class II loading compartments. In addition to APCs, other cells of the gastrointestinal tract, such as epithelial cells, express MHC class II molecules and CD74 and act as APCs, which is an unusual trait of the GI tract. To produce a MHC class II molecule that presents an antigen, three MHC class II molecules (heterodimers of an alpha and a beta chain) associate with a CD74 trimer in the ER to form a heterononamer. Soon after the entry of this complex into the endosomal/lysosomal system where antigen processing occurs, CD74 undergoes a sequential degradation by various proteases, including CTSS and CTSL, leaving a small fragment termed CLIP (class-II-associated invariant chain peptide). The removal of CLIP is facilitated by HLA-DM via direct binding to the alpha-beta-CLIP complex so that CLIP is released. HLA-DM stabilizes MHC class II molecules until primary high affinity antigenic peptides are bound. The MHC II molecule bound to a peptide is then transported to the cell membrane surface. In B-cells, the interaction between HLA-DM and MHC class II molecules is regulated by HLA-DO. Primary dendritic cells (DCs) also to express HLA-DO. Lysosomal microenvironment has been implicated in the regulation of antigen loading into MHC II molecules, increased acidification produces increased proteolysis and efficient peptide loading. The sequence is that of HLA class II histocompatibility antigen, DQ beta 1 chain (HLA-DQB1) from Homo sapiens (Human).